A 448-amino-acid polypeptide reads, in one-letter code: uncharacterized protein (448 aa).

Position 297 is an N6-(pyridoxal phosphate)lysine (Lys-297).

This sequence belongs to the class-III pyridoxal-phosphate-dependent aminotransferase family. The cofactor is pyridoxal 5'-phosphate.

This is an uncharacterized protein from Sinorhizobium fredii (strain NBRC 101917 / NGR234).